Here is a 670-residue protein sequence, read N- to C-terminus: NADH-ubiquinone oxidoreductase chain 5 (670 aa).

19 helical membrane passes run 1-21 (MYIV…IFGH), 31-51 (IAVG…YEIL), 81-101 (LTSI…LYSM), 111-131 (TRFF…VTAD), 133-153 (FVQL…LINF), 178-198 (LFFG…SVIF), 211-231 (LLGY…IGVV), 251-271 (TPVS…FLVL), 283-303 (ILNI…TIGI), 311-331 (VIAY…GLLN), 339-359 (LTTH…VIHG), 375-395 (LMPL…GFPF), 421-441 (AIIG…LLIL), 462-482 (TNMV…GYVT), 519-539 (LLPL…YFNI), 566-586 (FDFL…YDVM), 594-614 (LWEK…FTAL), 629-649 (IVQT…TGFI), and 650-670 (YMEL…IKID).

This sequence belongs to the complex I subunit 5 family.

Its subcellular location is the mitochondrion inner membrane. The catalysed reaction is a ubiquinone + NADH + 5 H(+)(in) = a ubiquinol + NAD(+) + 4 H(+)(out). In terms of biological role, core subunit of the mitochondrial membrane respiratory chain NADH dehydrogenase (Complex I) that is believed to belong to the minimal assembly required for catalysis. Complex I functions in the transfer of electrons from NADH to the respiratory chain. The immediate electron acceptor for the enzyme is believed to be ubiquinone. The sequence is that of NADH-ubiquinone oxidoreductase chain 5 (nad5) from Dictyostelium discoideum (Social amoeba).